Reading from the N-terminus, the 716-residue chain is Centrosomal protein of 83 kDa (716 aa).

The segment at 1–20 (MDKMNPPALGQASALFPDLE) is disordered. The stretch at 55–638 (RCENHKTNYQ…HNEFRRLLLG (584 aa)) forms a coiled coil. Positions 691–716 (LEELAAPLDRDRERLSSPRDALPDLS) are disordered. Residues 698 to 707 (LDRDRERLSS) are compositionally biased toward basic and acidic residues.

This sequence belongs to the CEP83 family.

It is found in the cytoplasm. The protein resides in the cytoskeleton. Its subcellular location is the microtubule organizing center. It localises to the centrosome. The protein localises to the centriole. Component of the distal appendage region of the centriole involved in the initiation of primary cilium assembly. The chain is Centrosomal protein of 83 kDa (cep83) from Danio rerio (Zebrafish).